Reading from the N-terminus, the 219-residue chain is Deoxyribose-phosphate aldolase (219 aa).

The active-site Proton donor/acceptor is aspartate 93. Lysine 154 serves as the catalytic Schiff-base intermediate with acetaldehyde. Residue lysine 179 is the Proton donor/acceptor of the active site.

This sequence belongs to the DeoC/FbaB aldolase family. DeoC type 1 subfamily.

The protein resides in the cytoplasm. The enzyme catalyses 2-deoxy-D-ribose 5-phosphate = D-glyceraldehyde 3-phosphate + acetaldehyde. Its pathway is carbohydrate degradation; 2-deoxy-D-ribose 1-phosphate degradation; D-glyceraldehyde 3-phosphate and acetaldehyde from 2-deoxy-alpha-D-ribose 1-phosphate: step 2/2. In terms of biological role, catalyzes a reversible aldol reaction between acetaldehyde and D-glyceraldehyde 3-phosphate to generate 2-deoxy-D-ribose 5-phosphate. In Haloquadratum walsbyi (strain DSM 16790 / HBSQ001), this protein is Deoxyribose-phosphate aldolase.